The sequence spans 365 residues: 3-isopropylmalate dehydrogenase (365 aa).

78–91 (GKKWNNLPIEKRPE) lines the NAD(+) pocket. Substrate contacts are provided by arginine 99, arginine 109, arginine 139, and aspartate 228. Residues aspartate 228, aspartate 252, and aspartate 256 each contribute to the Mg(2+) site. 286–298 (GSAPDIAGKNIAN) provides a ligand contact to NAD(+).

The protein belongs to the isocitrate and isopropylmalate dehydrogenases family. LeuB type 1 subfamily. As to quaternary structure, homodimer. Mg(2+) is required as a cofactor. The cofactor is Mn(2+).

The protein localises to the cytoplasm. The enzyme catalyses (2R,3S)-3-isopropylmalate + NAD(+) = 4-methyl-2-oxopentanoate + CO2 + NADH. It participates in amino-acid biosynthesis; L-leucine biosynthesis; L-leucine from 3-methyl-2-oxobutanoate: step 3/4. Catalyzes the oxidation of 3-carboxy-2-hydroxy-4-methylpentanoate (3-isopropylmalate) to 3-carboxy-4-methyl-2-oxopentanoate. The product decarboxylates to 4-methyl-2 oxopentanoate. The polypeptide is 3-isopropylmalate dehydrogenase (Buchnera aphidicola subsp. Macrosiphoniella ludovicianae).